Reading from the N-terminus, the 257-residue chain is 3-oxo-5-alpha-steroid 4-dehydrogenase 1 (257 aa).

The next 6 membrane-spanning stretches (helical) occupy residues 7-27, 50-70, 84-104, 109-129, 149-169, and 208-228; these read FLLDALAYLECALGVVCYVLL, AAWTVQELPSLALPLLACAGA, ILLAMFLVHYAQRSLVFPFLI, PMPLYAFLLAFIFCTYNGYLQ, FLTGSALWLIGMLINIHSDHV, and ALASWSIQGWAFAVFTFCVLF.

The protein belongs to the steroid 5-alpha reductase family.

The protein resides in the microsome membrane. It localises to the endoplasmic reticulum membrane. The enzyme catalyses a 3-oxo-5alpha-steroid + NADP(+) = a 3-oxo-Delta(4)-steroid + NADPH + H(+). It catalyses the reaction 5alpha-pregnane-3,20-dione + NADP(+) = progesterone + NADPH + H(+). It carries out the reaction 17beta-hydroxy-5alpha-androstan-3-one + NADP(+) = testosterone + NADPH + H(+). The catalysed reaction is androst-4-ene-3,17-dione + NADPH + H(+) = 5alpha-androstan-3,17-dione + NADP(+). Converts testosterone into 5-alpha-dihydrotestosterone and progesterone or corticosterone into their corresponding 5-alpha-3-oxosteroids. It plays a central role in sexual differentiation and androgen physiology. This Bos taurus (Bovine) protein is 3-oxo-5-alpha-steroid 4-dehydrogenase 1 (SRD5A1).